The chain runs to 246 residues: Probable transcriptional regulatory protein NT01CX_1819 (246 aa).

Belongs to the TACO1 family.

It is found in the cytoplasm. The protein is Probable transcriptional regulatory protein NT01CX_1819 of Clostridium novyi (strain NT).